The following is a 159-amino-acid chain: 2-C-methyl-D-erythritol 2,4-cyclodiphosphate synthase (159 aa).

Asp-8 and His-10 together coordinate a divalent metal cation. 4-CDP-2-C-methyl-D-erythritol 2-phosphate contacts are provided by residues 8 to 10 (DVH) and 34 to 35 (HS). A divalent metal cation is bound at residue His-42. Residues 56–58 (DIG), 61–65 (FPDTD), 100–106 (AQAPKML), 132–135 (TTTE), Phe-139, and Arg-142 each bind 4-CDP-2-C-methyl-D-erythritol 2-phosphate.

Belongs to the IspF family. As to quaternary structure, homotrimer. Requires a divalent metal cation as cofactor.

The enzyme catalyses 4-CDP-2-C-methyl-D-erythritol 2-phosphate = 2-C-methyl-D-erythritol 2,4-cyclic diphosphate + CMP. Its pathway is isoprenoid biosynthesis; isopentenyl diphosphate biosynthesis via DXP pathway; isopentenyl diphosphate from 1-deoxy-D-xylulose 5-phosphate: step 4/6. In terms of biological role, involved in the biosynthesis of isopentenyl diphosphate (IPP) and dimethylallyl diphosphate (DMAPP), two major building blocks of isoprenoid compounds. Catalyzes the conversion of 4-diphosphocytidyl-2-C-methyl-D-erythritol 2-phosphate (CDP-ME2P) to 2-C-methyl-D-erythritol 2,4-cyclodiphosphate (ME-CPP) with a corresponding release of cytidine 5-monophosphate (CMP). The sequence is that of 2-C-methyl-D-erythritol 2,4-cyclodiphosphate synthase from Klebsiella pneumoniae subsp. pneumoniae (strain ATCC 700721 / MGH 78578).